The chain runs to 434 residues: Phosphomethylpyrimidine synthase (434 aa).

Substrate is bound by residues Asn74, Met103, Tyr132, His171, 193-195 (SRG), 234-237 (DGIR), and Glu273. His277 provides a ligand contact to Zn(2+). Tyr300 is a substrate binding site. A Zn(2+)-binding site is contributed by His341. Cys417, Cys420, and Cys424 together coordinate [4Fe-4S] cluster.

Belongs to the ThiC family. Homodimer. Requires [4Fe-4S] cluster as cofactor.

It carries out the reaction 5-amino-1-(5-phospho-beta-D-ribosyl)imidazole + S-adenosyl-L-methionine = 4-amino-2-methyl-5-(phosphooxymethyl)pyrimidine + CO + 5'-deoxyadenosine + formate + L-methionine + 3 H(+). Its pathway is cofactor biosynthesis; thiamine diphosphate biosynthesis. Its function is as follows. Catalyzes the synthesis of the hydroxymethylpyrimidine phosphate (HMP-P) moiety of thiamine from aminoimidazole ribotide (AIR) in a radical S-adenosyl-L-methionine (SAM)-dependent reaction. The protein is Phosphomethylpyrimidine synthase of Desulfotalea psychrophila (strain LSv54 / DSM 12343).